The following is a 180-amino-acid chain: Stathmin-3 (180 aa).

Residues Cys22 and Cys24 are each lipidated (S-palmitoyl cysteine). The SLD domain occupies 38–180 (GDMEVKQLDK…NKEQREEMSG (143 aa)). Residues Ser50, Ser60, Ser65, Ser68, Ser72, Ser73, and Ser81 each carry the phosphoserine modification. The tract at residues 59 to 82 (KSPSDLSPESPMLSSPPKKKDTSL) is disordered. Over residues 60-74 (SPSDLSPESPMLSSP) the composition is skewed to low complexity. A coiled-coil region spans residues 76-179 (KKKDTSLEEL…RNKEQREEMS (104 aa)).

This sequence belongs to the stathmin family. In terms of assembly, interacts with STAT3. Interacts with CLU (secreted form); this interaction may act as an important modulator during neuronal differentiation. N-terminal palmitoylation promotes specific anchoring to the cytosolic leaflet of Golgi membranes and subsequent vesicular trafficking along dendrites and axons. Neuronal Stathmins are substrates for palmitoyltransferases ZDHHC3, ZDHHC7 and ZDHHC15.

It is found in the golgi apparatus. It localises to the cell projection. The protein localises to the growth cone. Its subcellular location is the axon. The protein resides in the cytoplasm. It is found in the cytosol. Its function is as follows. Exhibits microtubule-destabilizing activity, which is antagonized by STAT3. The protein is Stathmin-3 (STMN3) of Macaca fascicularis (Crab-eating macaque).